Reading from the N-terminus, the 200-residue chain is Late embryogenesis abundant protein 19 (200 aa).

Disordered regions lie at residues 1 to 158 (MASH…KSTV) and 172 to 200 (TEDK…ARDH). Basic and acidic residues-rich tracts occupy residues 13 to 23 (GETKAHTEEKA), 30 to 42 (SKDK…DRAS), 53 to 81 (QDTK…KDKT), 88 to 97 (ARDKAAESKD), and 105 to 114 (EKTEQAKQKA). Positions 52–81 (GQDTKEATKEKAQAAKERASETAQAAKDKT) form a coiled coil. A compositionally biased stretch (low complexity) spans 115–130 (AETAGAAKQKTAETAQ). Polar residues predominate over residues 145–156 (SVLQQASEQVKS). Residues 172–183 (TEDKAGTDDGAN) are compositionally biased toward basic and acidic residues. Low complexity predominate over residues 186-200 (TSATAAATETTARDH).

It belongs to the LEA type 4 family. Expressed in the shoot apex and leaves.

In terms of biological role, involved in response to drought stress. The protein is Late embryogenesis abundant protein 19 of Oryza sativa subsp. indica (Rice).